Consider the following 365-residue polypeptide: Methionine import ATP-binding protein MetN (365 aa).

The 236-residue stretch at 26 to 261 (VRLVDLKRRF…PQSDITKSLL (236 aa)) folds into the ABC transporter domain. 58–65 (GRSGAGKS) provides a ligand contact to ATP.

Belongs to the ABC transporter superfamily. Methionine importer (TC 3.A.1.24) family. As to quaternary structure, the complex is composed of two ATP-binding proteins (MetN), two transmembrane proteins (MetI) and a solute-binding protein (MetQ).

The protein localises to the cell inner membrane. The catalysed reaction is L-methionine(out) + ATP + H2O = L-methionine(in) + ADP + phosphate + H(+). The enzyme catalyses D-methionine(out) + ATP + H2O = D-methionine(in) + ADP + phosphate + H(+). Its function is as follows. Part of the ABC transporter complex MetNIQ involved in methionine import. Responsible for energy coupling to the transport system. This chain is Methionine import ATP-binding protein MetN, found in Mesorhizobium japonicum (strain LMG 29417 / CECT 9101 / MAFF 303099) (Mesorhizobium loti (strain MAFF 303099)).